Reading from the N-terminus, the 326-residue chain is Tetraacyldisaccharide 4'-kinase (326 aa).

58-65 provides a ligand contact to ATP; that stretch reads SVGGNGKT.

This sequence belongs to the LpxK family.

The enzyme catalyses a lipid A disaccharide + ATP = a lipid IVA + ADP + H(+). It participates in glycolipid biosynthesis; lipid IV(A) biosynthesis; lipid IV(A) from (3R)-3-hydroxytetradecanoyl-[acyl-carrier-protein] and UDP-N-acetyl-alpha-D-glucosamine: step 6/6. Transfers the gamma-phosphate of ATP to the 4'-position of a tetraacyldisaccharide 1-phosphate intermediate (termed DS-1-P) to form tetraacyldisaccharide 1,4'-bis-phosphate (lipid IVA). This chain is Tetraacyldisaccharide 4'-kinase, found in Pseudoalteromonas translucida (strain TAC 125).